The following is a 359-amino-acid chain: MSSQLIPATRRVLNNAPLLDAAHGKTPTRTPVWFMRQAGRSLPEYLKVREGISMLDSCFMPELLAEITMQPVRRHDVDAAILFSDIVVPLRAAGVGVEIVPGRGPVMDQPVRTRADIDNLPILDHEVTEVSKGISIILDELTDTQALIGFAGAPFTLASYLVEGGPSKNHERTKAMIHAEPETWHALMERLVPTVVNFLKTQIDAGIDAMQLFDSWAGFLTERDYTEHVLPYSTRILQEVEQYQLPRIHFGVGTGELLGAMSRAGSEVMGVDWRVPLDKAAERIAAVSGPKVLQGNLDPALLFAGTEPLTREINRIKGEAAAAIAAGNATGHIFNLGHGVLPNTVAENITEAVSIIHAS.

Residues 36 to 40 (RQAGR), aspartate 85, tyrosine 160, serine 215, and histidine 338 each bind substrate.

It belongs to the uroporphyrinogen decarboxylase family. In terms of assembly, homodimer.

Its subcellular location is the cytoplasm. The enzyme catalyses uroporphyrinogen III + 4 H(+) = coproporphyrinogen III + 4 CO2. It participates in porphyrin-containing compound metabolism; protoporphyrin-IX biosynthesis; coproporphyrinogen-III from 5-aminolevulinate: step 4/4. Functionally, catalyzes the decarboxylation of four acetate groups of uroporphyrinogen-III to yield coproporphyrinogen-III. This is Uroporphyrinogen decarboxylase from Corynebacterium efficiens (strain DSM 44549 / YS-314 / AJ 12310 / JCM 11189 / NBRC 100395).